Reading from the N-terminus, the 731-residue chain is MQTVMMDDIQSTDSIAEKDNHSNNESNFTWKAFREQVEKHFSKIERLHQVLGTDGDNSSLFELFTTAMNAQLHEMEQCQKKLEDDCQQRIDSIRFLVSSLKLTDDTSSLKIESPLIQCLNRLSMVEGQYMAQYDQKLSTIKEMYHKLESYCNRLGSPFVLPDFENSFLSDVSDAFTESLRGRINEAEKEIDARLEVINSFEEEILGLWSELGVEPADVPQYEQLLESHTNRPNDVYVTQELIDQLCKQKEVFSAEKEKRSDHLKSIQSEVSNLWNKLQVSPNEQSQFGDSSNINQENISLWETELEKLHQLKKEHLPIFLEDCRQQILQLWDSLFYSEEQRKSFTPMYEDIITEQVLTAHENYIKQLEAEVSANKSFLSLINRYASLIEGKKELEASSNDASRLTQRGRRDPGLLLREEKIRKRLSRELPKVQSLLIPEITAWEERNGRTFLFYDEPLLKICQEATQPKSLYRSASAAANRPKTATTTDSVNRTPSQRGRVAVPSTPSVRSASRAMTSPRTPLPRVKNTQNPSRSISAEPPSATSTANRRHPTANRIDINARLNSASRSRSANMIRQGANGSDSNMSSSPVSGNSNTPFNKFPNSVSRNTHFESKSPHPNYSRTPHETYSKASSKNVPLSPPKQRVVNEHALNIMSEKLQRTNLKEQTPEMDIENSSQNLPFSPMKISPIRASPVKTIPSSPSPTTNIFSAPLNNITNCTPMEDEWGEEGF.

The segment at 472–642 (YRSASAAANR…SSKNVPLSPP (171 aa)) is disordered. Polar residues-rich tracts occupy residues 483 to 497 (KTAT…TPSQ), 505 to 520 (STPS…TSPR), and 527 to 547 (KNTQ…TSTA). Ser-537 is modified (phosphoserine). Over residues 560-596 (NARLNSASRSRSANMIRQGANGSDSNMSSSPVSGNSN) the composition is skewed to low complexity. Over residues 597–609 (TPFNKFPNSVSRN) the composition is skewed to polar residues.

This sequence belongs to the MAP65/ASE1 family. Interacts with klp9.

The protein resides in the cytoplasm. It is found in the cytoskeleton. The protein localises to the spindle. Functionally, required for anaphase spindle elongation and microtubule bundling in both interphase and mitosis. Has a role in spatial and temporal regulation of septation and cytokinesis and ensures equal partition of segregating sister chromatids. Ensures correct midzone positioning of protein kinase ark1. Acts as a regulatory component at cytokinesis checkpoint where it inhibits nuclear division when actomyosin ring formation is impaired. This is Anaphase spindle elongation protein 1 (ase1) from Schizosaccharomyces pombe (strain 972 / ATCC 24843) (Fission yeast).